We begin with the raw amino-acid sequence, 746 residues long: Stromal interaction molecule 2 (746 aa).

The first 14 residues, 1–14 (MLLFGLLVAGVADG), serve as a signal peptide directing secretion. At 15–218 (CDLVPRHLRG…RPPHNWMKDF (204 aa)) the chain is on the extracellular side. Serine 28 carries the post-translational modification Phosphoserine. Positions 67–102 (FSLEALQTIHKQMDDDKDGGIEVDESDEFIREDMKY) constitute an EF-hand domain. 4 residues coordinate Ca(2+): aspartate 80, aspartate 82, aspartate 84, and glutamate 91. The N-linked (GlcNAc...) asparagine glycan is linked to asparagine 135. The region spanning 136–204 (WTLEDTLQWL…QLKALDVVLF (69 aa)) is the SAM domain. The helical transmembrane segment at 219 to 235 (ILTISIVIGVGGCWFAY) threads the bilayer. The Cytoplasmic segment spans residues 236–746 (TQNKTSKEHV…IKSLFKKKSK (511 aa)). The stretch at 247–394 (KMMKDLESLQ…EKIKKKRSTV (148 aa)) forms a coiled coil. Disordered stretches follow at residues 490-562 (PIVP…PDIL) and 592-651 (DTAS…RGSP). The residue at position 523 (serine 523) is a Phosphoserine. Residues 527–539 (QRAQLPAHAPLAA) are compositionally biased toward low complexity. Residues 540-549 (HPRHPHHPQH) are compositionally biased toward basic residues. A phosphoserine mark is found at serine 609 and serine 621. Positions 625–637 (ISRDELSLEDSSR) are enriched in basic and acidic residues. A phosphoserine mark is found at serine 640, serine 650, serine 661, serine 665, serine 680, and serine 697. A disordered region spans residues 684 to 746 (LSSGIPVPHP…IKSLFKKKSK (63 aa)). Over residues 723 to 732 (DLCHNGEKSK) the composition is skewed to basic and acidic residues. Residues 733–746 (KPSKIKSLFKKKSK) are compositionally biased toward basic residues.

In terms of assembly, oligomer with STIM1. Interacts with ORAI1. In terms of processing, glycosylated. Phosphorylated predominantly on Ser residues.

The protein localises to the endoplasmic reticulum membrane. Its function is as follows. Plays a role in mediating store-operated Ca(2+) entry (SOCE), a Ca(2+) influx following depletion of intracellular Ca(2+) stores. Functions as a highly sensitive Ca(2+) sensor in the endoplasmic reticulum which activates both store-operated and store-independent Ca(2+)-influx. Regulates basal cytosolic and endoplasmic reticulum Ca(2+) concentrations. Upon mild variations of the endoplasmic reticulum Ca(2+) concentration, translocates from the endoplasmic reticulum to the plasma membrane where it probably activates the Ca(2+) release-activated Ca(2+) (CRAC) channels ORAI1, ORAI2 and ORAI3. May inhibit STIM1-mediated Ca(2+) influx. The chain is Stromal interaction molecule 2 (Stim2) from Mus musculus (Mouse).